The sequence spans 138 residues: Acidic phospholipase A2 Drk-a1 (138 aa).

The N-terminal stretch at 1–16 (MRTLWIVAVCLIGVEG) is a signal peptide. 7 disulfide bridges follow: Cys42–Cys131, Cys44–Cys60, Cys59–Cys111, Cys65–Cys138, Cys66–Cys104, Cys73–Cys97, and Cys91–Cys102. The Ca(2+) site is built by Tyr43, Gly45, and Gly47. The active site involves His63. Asp64 provides a ligand contact to Ca(2+). Residue Asp105 is part of the active site.

It belongs to the phospholipase A2 family. Group II subfamily. D49 sub-subfamily. Ca(2+) serves as cofactor. Expressed by the venom gland.

Its subcellular location is the secreted. It catalyses the reaction a 1,2-diacyl-sn-glycero-3-phosphocholine + H2O = a 1-acyl-sn-glycero-3-phosphocholine + a fatty acid + H(+). Snake venom phospholipase A2 (PLA2) that exhibits high hydrolytic activities and shows strong preference for the anionic micelles (dPPC with deoxycholate) to the zwitterionic micelles (dPPC with Triton X-100). PLA2 catalyzes the calcium-dependent hydrolysis of the 2-acyl groups in 3-sn-phosphoglycerides. In Daboia russelii (Russel's viper), this protein is Acidic phospholipase A2 Drk-a1.